A 278-amino-acid chain; its full sequence is Bifunctional protein FolD (278 aa).

NADP(+)-binding positions include 163 to 165, S188, and V229; that span reads GRS.

Belongs to the tetrahydrofolate dehydrogenase/cyclohydrolase family. As to quaternary structure, homodimer.

It catalyses the reaction (6R)-5,10-methylene-5,6,7,8-tetrahydrofolate + NADP(+) = (6R)-5,10-methenyltetrahydrofolate + NADPH. The enzyme catalyses (6R)-5,10-methenyltetrahydrofolate + H2O = (6R)-10-formyltetrahydrofolate + H(+). Its pathway is one-carbon metabolism; tetrahydrofolate interconversion. Functionally, catalyzes the oxidation of 5,10-methylenetetrahydrofolate to 5,10-methenyltetrahydrofolate and then the hydrolysis of 5,10-methenyltetrahydrofolate to 10-formyltetrahydrofolate. The polypeptide is Bifunctional protein FolD (Exiguobacterium sp. (strain ATCC BAA-1283 / AT1b)).